The sequence spans 342 residues: uncharacterized protein (342 aa).

This sequence belongs to the cycloisomerase 2 family.

This is an uncharacterized protein from Staphylococcus aureus (strain NCTC 8325 / PS 47).